We begin with the raw amino-acid sequence, 207 residues long: Redox-sensing transcriptional repressor Rex (207 aa).

A DNA-binding region (H-T-H motif) is located at residues Ile17–Phe56. Position 91–96 (Gly91–Gly96) interacts with NAD(+).

This sequence belongs to the transcriptional regulatory Rex family. In terms of assembly, homodimer.

It is found in the cytoplasm. Functionally, modulates transcription in response to changes in cellular NADH/NAD(+) redox state. In Brevibacillus brevis (strain 47 / JCM 6285 / NBRC 100599), this protein is Redox-sensing transcriptional repressor Rex.